The sequence spans 273 residues: Eukaryotic translation initiation factor 3 subunit G-2 (273 aa).

Positions 165-193 are disordered; sequence KYVPPFMKDGGGGPGGKNWGRGRERDDSS. Residues 173–183 are compositionally biased toward gly residues; it reads DGGGGPGGKNW. In terms of domain architecture, RRM spans 193–271; it reads SAVRISNLSE…LILCVEWSKP (79 aa).

It belongs to the eIF-3 subunit G family. In terms of assembly, component of the eukaryotic translation initiation factor 3 (eIF-3) complex. The eIF-3 complex interacts with pix.

The protein resides in the cytoplasm. Functionally, RNA-binding component of the eukaryotic translation initiation factor 3 (eIF-3) complex, which is involved in protein synthesis of a specialized repertoire of mRNAs and, together with other initiation factors, stimulates binding of mRNA and methionyl-tRNAi to the 40S ribosome. The eIF-3 complex specifically targets and initiates translation of a subset of mRNAs involved in cell proliferation. This subunit can bind 18S rRNA. The chain is Eukaryotic translation initiation factor 3 subunit G-2 from Drosophila yakuba (Fruit fly).